We begin with the raw amino-acid sequence, 389 residues long: Fructose-1,6-bisphosphate aldolase/phosphatase (389 aa).

The active-site Proton acceptor; for FBP phosphatase activity is the Asp17. Asp17, His24, Asp57, and Asp58 together coordinate Mg(2+). Position 24 (His24) interacts with beta-D-fructose 1,6-bisphosphate. His24 contributes to the dihydroxyacetone phosphate binding site. Tyr95 contributes to the beta-D-fructose 1,6-bisphosphate binding site. Gln99 provides a ligand contact to Mg(2+). 108–109 lines the beta-D-fructose 1,6-bisphosphate pocket; that stretch reads GN. A Mg(2+)-binding site is contributed by Asp136. Lys137 is a beta-D-fructose 1,6-bisphosphate binding site. Lys137 lines the dihydroxyacetone phosphate pocket. Residue Tyr233 is the Proton donor/acceptor; for FBP aldolase activity of the active site. Positions 236, 237, and 238 each coordinate Mg(2+). Residue Lys236 is the Schiff-base intermediate with DHAP; for FBP aldolase activity of the active site. Beta-D-fructose 1,6-bisphosphate-binding positions include 246-247, Arg270, Asp291, and Tyr352; that span reads QS. Residues Arg270 and Asp291 each coordinate dihydroxyacetone phosphate.

Belongs to the FBP aldolase/phosphatase family. Homooctamer; dimer of tetramers. The cofactor is Mg(2+).

It carries out the reaction beta-D-fructose 1,6-bisphosphate + H2O = beta-D-fructose 6-phosphate + phosphate. The enzyme catalyses beta-D-fructose 1,6-bisphosphate = D-glyceraldehyde 3-phosphate + dihydroxyacetone phosphate. The protein operates within carbohydrate biosynthesis; gluconeogenesis. Functionally, catalyzes two subsequent steps in gluconeogenesis: the aldol condensation of dihydroxyacetone phosphate (DHAP) and glyceraldehyde-3-phosphate (GA3P) to fructose-1,6-bisphosphate (FBP), and the dephosphorylation of FBP to fructose-6-phosphate (F6P). The sequence is that of Fructose-1,6-bisphosphate aldolase/phosphatase from Methanocaldococcus jannaschii (strain ATCC 43067 / DSM 2661 / JAL-1 / JCM 10045 / NBRC 100440) (Methanococcus jannaschii).